Reading from the N-terminus, the 1377-residue chain is Clustered mitochondria protein homolog (1377 aa).

The tract at residues 1–61 (MLKSIQRNGK…GETKKKSDSE (61 aa)) is disordered. The 243-residue stretch at 353–595 (RAEDTFSSKL…RTFPPDVNFL (243 aa)) folds into the Clu domain. A TPR 1 repeat occupies 519–552 (VYGSIDFGKTVLSHEKYLELLNNAGKHLKIYPHS). 2 disordered regions span residues 651-700 (NKRQ…VPKV) and 886-917 (DVLTKSGSSGKQQRKQNKRTAAGGGKGGKSSF). Over residues 655 to 690 (QKQDTPKEETKAIEPAAKEDSANNNKEEPAAKKGEP) the composition is skewed to basic and acidic residues. Residues 886 to 896 (DVLTKSGSSGK) show a composition bias toward polar residues. 3 TPR repeats span residues 1022 to 1055 (AYNFYTTGQTKIQQGYFKDGYDLISEALNLLNNV), 1148 to 1181 (ALLDSNISLILHAVGEYELSLRFLEHALALNIKY), and 1183 to 1216 (GEKSLKVAVSYHLVARTQSCMGDFRSALNNEKET). The segment at 1310–1377 (KEGGAAGESS…SKANPVASSS (68 aa)) is disordered. Low complexity predominate over residues 1364–1377 (ASSSSKANPVASSS).

The protein belongs to the CLU family.

It is found in the cytoplasm. MRNA-binding protein involved in proper cytoplasmic distribution of mitochondria. The sequence is that of Clustered mitochondria protein homolog from Culex quinquefasciatus (Southern house mosquito).